Reading from the N-terminus, the 302-residue chain is Flavin-dependent thymidylate synthase (302 aa).

The ThyX domain maps to G43 to Y257. FAD contacts are provided by residues T89, R112–R114, and E120. Residues Q109–R112, E120–R124, and R196 contribute to the dUMP site. The ThyX motif signature appears at R112 to S122. FAD contacts are provided by residues D212 to H214 and H218. R223 provides a ligand contact to dUMP. The Involved in ionization of N3 of dUMP, leading to its activation role is filled by R223.

Belongs to the thymidylate synthase ThyX family. As to quaternary structure, homotetramer. The cofactor is FAD.

It carries out the reaction dUMP + (6R)-5,10-methylene-5,6,7,8-tetrahydrofolate + NADPH + H(+) = dTMP + (6S)-5,6,7,8-tetrahydrofolate + NADP(+). It functions in the pathway pyrimidine metabolism; dTTP biosynthesis. Functionally, catalyzes the reductive methylation of 2'-deoxyuridine-5'-monophosphate (dUMP) to 2'-deoxythymidine-5'-monophosphate (dTMP) while utilizing 5,10-methylenetetrahydrofolate (mTHF) as the methyl donor, and NADPH and FADH(2) as the reductant. The sequence is that of Flavin-dependent thymidylate synthase from Ruegeria pomeroyi (strain ATCC 700808 / DSM 15171 / DSS-3) (Silicibacter pomeroyi).